The primary structure comprises 325 residues: Putative HTH-type transcriptional regulatory protein HQ_3058A (325 aa).

The region spanning 132 to 186 is the HTH cro/C1-type domain; that stretch reads LADEREERGWSLGRLATELGVSRRTVSKYEDGMNASIEIAIQLEEVFDEPFSSPL. The H-T-H motif DNA-binding region spans 143-162; that stretch reads LGRLATELGVSRRTVSKYED. Positions 189–211 are disordered; it reads MEGAESVRDSEPTPDDPDPDADD. Residues 200 to 211 show a composition bias toward acidic residues; that stretch reads PTPDDPDPDADD.

In Haloquadratum walsbyi (strain DSM 16790 / HBSQ001), this protein is Putative HTH-type transcriptional regulatory protein HQ_3058A.